The primary structure comprises 303 residues: Mitochondrial carrier homolog 2 (303 aa).

Ala-2 carries the post-translational modification N-acetylalanine. Residues 2 to 15 (ADAASQVLLGSGLT) lie on the Mitochondrial intermembrane side of the membrane. Solcar repeat units follow at residues 2–98 (ADAA…YQEC) and 118–206 (DRVI…VNTY). A helical membrane pass occupies residues 16–36 (ILSQPLMYVKVLIQVGYEPLA). At 37–77 (PTVGRNIFGRQVCQLPGLFCYAQHIASIDGKRGLFTGLTPR) the chain is on the cytoplasmic side. The chain crosses the membrane as a helical span at residues 78–92 (LCSGVLGTVVHGKVL). At 93–135 (QHYQECDKAEESGSGNVQKEVSSSFDRVIKETTREMMARSAAT) the chain is on the mitochondrial intermembrane side. A helical transmembrane segment spans residues 136–156 (LITHPFHVITLRSMVQFIGRE). The Cytoplasmic segment spans residues 157–180 (SKYCGLCDSIATIYREEGILGFFA). Residues 181–199 (GLIPRLLGDIISLWLCNSL) form a helical membrane-spanning segment. Residues 200–231 (AYLVNTYALDSGVSTMNEMKSYSQAVTGFFAS) lie on the Mitochondrial intermembrane side of the membrane. Residues 232 to 252 (MLTYPFVLVSNLMAVNNCGLA) form a helical membrane-spanning segment. Topologically, residues 253–280 (GGCPPYAPIYSSWIDCWCMLQKEGNMSR) are cytoplasmic. A helical membrane pass occupies residues 281-303 (GNSLFFRKVPFGKTYCCDLRMLI).

The protein belongs to the mitochondrial carrier (TC 2.A.29) family. Interacts with p15BID.

It localises to the mitochondrion outer membrane. Its function is as follows. Protein insertase that mediates insertion of transmembrane proteins into the mitochondrial outer membrane. Catalyzes insertion of proteins with alpha-helical transmembrane regions, such as signal-anchored, tail-anchored and multi-pass membrane proteins. Does not mediate insertion of beta-barrel transmembrane proteins. Also acts as a receptor for the truncated form of pro-apoptotic BH3-interacting domain death agonist (p15 BID) and has therefore a critical function in apoptosis. Regulates the quiescence/cycling of hematopoietic stem cells (HSCs). Acts as a regulator of mitochondrial fusion, essential for the naive-to-primed interconversion of embryonic stem cells (ESCs). Acts as a regulator of lipid homeostasis and has a regulatory role in adipocyte differentiation and biology. The protein is Mitochondrial carrier homolog 2 (MTCH2) of Bos taurus (Bovine).